The chain runs to 405 residues: Potassium channel subfamily K member 13 (405 aa).

The Cytoplasmic portion of the chain corresponds to 1–19; that stretch reads MAGRGCSCSPGHLNEDNAR. Residues 20–40 form a helical membrane-spanning segment; that stretch reads FLLLAGLILLYLLGGAAVFSA. 2 N-linked (GlcNAc...) asparagine glycosylation sites follow: N59 and N65. Residues 95-115 constitute an intramembrane region (pore-forming); the sequence is WDFTGAFYFVGTVVTTIGFGM. K(+)-binding residues include T110, I111, and G112. The segment at 110 to 115 is selectivity filter 1; the sequence is TIGFGM. Residues 125–145 traverse the membrane as a helical segment; sequence VFLIFYGLIGCASTILFFNLF. Topologically, residues 146 to 193 are cytoplasmic; it reads LERLITVIAYVMRTCHHQQLRRRGTVARDNRKAPRKGEADSLAGWKPS. The helical transmembrane segment at 194–214 threads the bilayer; the sequence is VYYVMLILCLASVAISCGASA. An intramembrane region (pore-forming) is located at residues 224 to 244; the sequence is YFDSVYFCFVASSTIGFGDLV. K(+)-binding residues include T237, I238, G239, and F240. Residues 237 to 242 form a selectivity filter 2 region; that stretch reads TIGFGD. The helical transmembrane segment at 263-283 threads the bilayer; that stretch reads FFILMGVCCIYSMFNVISILI. The Cytoplasmic portion of the chain corresponds to 284–405; that stretch reads KQTVNWILRK…NRLAETSGDR (122 aa).

It belongs to the two pore domain potassium channel (TC 1.A.1.8) family. As to quaternary structure, homodimer. Heterodimer with KCNK12. In terms of tissue distribution, ubiquitous. In brain expression is rather low and restricted to the olfactory bulb and tubercle, to the ventromedial hypothalamic nucleus, lateral septal nucleus dorsal, lateral mammillary nucleus, lateral parabrachial nuclei, reticular nucleus and reunions nuclei.

The protein localises to the cell membrane. The enzyme catalyses K(+)(in) = K(+)(out). With respect to regulation, the channel currents are activated by arachidonic acid, inhibited by volatile anesthetic halothane, partially inhibited by Ba(2+) ions and only weakly inhibited by extracellular acidification to pH 6. Functionally, k(+) channel that conducts outward rectifying tonic currents potentiated by purinergic signals. Homo- and heterodimerizes to form functional channels with distinct regulatory and gating properties. Contributes most of K(+) currents at the plasma membrane of resting microglia. Maintains a depolarized membrane potential required for proper ramified microglia morphology and phagocytosis, selectively mediating microglial pruning of presynaptic compartments at hippocampal excitatory synapses. Upon local release of ATP caused by neuronal injury or infection, it is potentiated by P2RY12 and P2RX7 receptor signaling and contributes to ATP-triggered K(+) efflux underlying microglial NLRP3 inflammasome assembly and IL1B release. The chain is Potassium channel subfamily K member 13 from Rattus norvegicus (Rat).